Here is a 232-residue protein sequence, read N- to C-terminus: MKIYIEGEKIRGTFQKRVNRFIAEVKVGSQLVVVHVANTGRMKELLTPGAEVLLRRVNEPHRKTNYDLLMVYHKGILVSIDSKLPNRLLYQGFINKEIVAFDKFNEVKREVTYGKSRLDLALINEEKELVLIEAKCVTLVKEGELASFPDAPTERGTRHVRELTEAVKQNIRGAVFFIVQREDAVRFTPNKEMDPQFQQAVTEAKKAGVEFYAYNCIVTEDYIAINDELEIF.

It belongs to the SfsA family.

This Alkaliphilus metalliredigens (strain QYMF) protein is Sugar fermentation stimulation protein homolog.